We begin with the raw amino-acid sequence, 356 residues long: MKIADIQVRTEHFPLTRPYRIAFRSIEEIDNLIVEIRTADGLLGLGAASPERHVTGETLEACHAALDHDRLGWLMGRDIRTLPRLCRELAERLPAAPAARAALDMALHDLVAQCLGLPLVEILGRAHDSLPTSVTIGIKPVEETLAEAREHLALGFRVLKVKLCGDEEQDFERLRRLHETLAGRAVVRVDPNQSYDRDGLLRLDRLVQELGIEFIEQPFPAGRTDWLRALPKAIRRRIAADESLLGPADAFALAAPPAACGIFNIKLMKCGGLAPARRIATIAETAGIDLMWGCMDESRISIAAALHAALACPATRYLDLDGSFDLARDVAEGGFILEDGRLRVTERPGLGLVYPD.

Substrate is bound by residues threonine 135 and 160 to 162 (KVK). Mg(2+) is bound by residues aspartate 190, glutamate 216, and aspartate 241. Substrate contacts are provided by residues lysine 266, aspartate 296, and 319–321 (DLD).

Belongs to the mandelate racemase/muconate lactonizing enzyme family. Mg(2+) is required as a cofactor.

Functionally, catalyzes the epimerization of L-Lys-L-Arg to L-Lys-D-Arg. Can also catalyze the epimerization of other cationic dipeptides, such as L-Arg-L-Arg, L-Lys-L-Lys and L-Lys-L-His, but with lower efficiency (in vitro). This Methylococcus capsulatus (strain ATCC 33009 / NCIMB 11132 / Bath) protein is L-Lys-D/L-Arg epimerase.